The chain runs to 151 residues: NAD(P)H-quinone oxidoreductase subunit N (151 aa).

Belongs to the complex I NdhN subunit family. In terms of assembly, NDH-1 can be composed of about 15 different subunits; different subcomplexes with different compositions have been identified which probably have different functions.

The protein localises to the cellular thylakoid membrane. The catalysed reaction is a plastoquinone + NADH + (n+1) H(+)(in) = a plastoquinol + NAD(+) + n H(+)(out). It carries out the reaction a plastoquinone + NADPH + (n+1) H(+)(in) = a plastoquinol + NADP(+) + n H(+)(out). In terms of biological role, NDH-1 shuttles electrons from an unknown electron donor, via FMN and iron-sulfur (Fe-S) centers, to quinones in the respiratory and/or the photosynthetic chain. The immediate electron acceptor for the enzyme in this species is believed to be plastoquinone. Couples the redox reaction to proton translocation, and thus conserves the redox energy in a proton gradient. Cyanobacterial NDH-1 also plays a role in inorganic carbon-concentration. This chain is NAD(P)H-quinone oxidoreductase subunit N, found in Acaryochloris marina (strain MBIC 11017).